Here is an 89-residue protein sequence, read N- to C-terminus: Small ribosomal subunit protein uS15 (89 aa).

Belongs to the universal ribosomal protein uS15 family. Part of the 30S ribosomal subunit. Forms a bridge to the 50S subunit in the 70S ribosome, contacting the 23S rRNA.

Its function is as follows. One of the primary rRNA binding proteins, it binds directly to 16S rRNA where it helps nucleate assembly of the platform of the 30S subunit by binding and bridging several RNA helices of the 16S rRNA. Functionally, forms an intersubunit bridge (bridge B4) with the 23S rRNA of the 50S subunit in the ribosome. This is Small ribosomal subunit protein uS15 from Desulfatibacillum aliphaticivorans.